The primary structure comprises 260 residues: Coiled-coil domain-containing protein 172 (260 aa).

A coiled-coil region spans residues 13-194; it reads SEHQAEESRR…FEDKKHEAIC (182 aa).

This sequence belongs to the CCDC172 family. As to quaternary structure, may interact with TEKT2.

The protein resides in the cytoplasm. The protein localises to the cell projection. It localises to the cilium. The sequence is that of Coiled-coil domain-containing protein 172 (CCDC172) from Bos taurus (Bovine).